We begin with the raw amino-acid sequence, 141 residues long: Large ribosomal subunit protein uL11B/uL11C (141 aa).

Belongs to the universal ribosomal protein uL11 family. In terms of assembly, part of the ribosomal stalk of the 50S ribosomal subunit. Interacts with L10 and the large rRNA to form the base of the stalk. L10 forms an elongated spine to which L12 dimers bind in a sequential fashion forming a multimeric L10(L12)X complex. One or more lysine residues are methylated.

Its function is as follows. Forms part of the ribosomal stalk which helps the ribosome interact with GTP-bound translation factors. This Bacillus cereus (strain ATCC 14579 / DSM 31 / CCUG 7414 / JCM 2152 / NBRC 15305 / NCIMB 9373 / NCTC 2599 / NRRL B-3711) protein is Large ribosomal subunit protein uL11B/uL11C.